The primary structure comprises 692 residues: MNNPAQLRQDTEKEVLALLGSLVLPAGTALAATGSLARSELTPYSDLDLILIHPPGATPDGVEDLWYPIWDAKKRLDYSVRTPDECVAMISADSTAALAMLDLRFVAGDEDLCAKTRRRIVEKWRQELNKNFDAVVDTAIARWRRSGPVVAMTRPDLKHGRGGLRDFELIKALALGHLCNLPQLDAQHQLLLDARTLLHVHARRSRDVLDPEFAVDVAMDLGFVDRYHLGREIADAARAIDDGLTTALATARGILPRRTGFAFRNASRRPLDLDVVDANGTIELSKKPDLNDPALPLRVAAAAATTGLPVAESTWVRLNECPPLPEPWPANAAGDFFRILSSPKNSRRVVKNMDRHGLWSRFVPEWDRIKGLMPREPSHISTIDEHSLNTVAGCALETVTVARPDLLVLGALYHDIGKGFPRPHEQVGAEMVARAASRMGLNLRDRASVQTLVAEHTAVAKIAARLDPSSEGAVDKLLDAVRYDLVTLNLLEVLTEADAKATGPGVWTARLEHALRIVCKRARDRLTDIRPVAPMIAPRSEIGLVERDGVFTVQWHGEDLHRILGVIYAKGWTITAARMLANGQWSAEFDVRANGPQDFDPQHFLQAYQSGVFSEVPIPALGITATFWHGNTLEVRTELRTGAIFALLRTLPDALWINAVTRGATLIIQAALKPGFDRATVERSVVRSLAGS.

Residues 1–270 (MNNPAQLRQD…FAFRNASRRP (270 aa)) form a uridylyltransferase region. The interval 271-692 (LDLDVVDANG…RSVVRSLAGS (422 aa)) is uridylyl-removing. Positions 383–484 (IDEHSLNTVA…DKLLDAVRYD (102 aa)) constitute an HD domain.

This sequence belongs to the GlnD family. It depends on Mg(2+) as a cofactor.

It catalyses the reaction [protein-PII]-L-tyrosine + UTP = [protein-PII]-uridylyl-L-tyrosine + diphosphate. The enzyme catalyses [protein-PII]-uridylyl-L-tyrosine + H2O = [protein-PII]-L-tyrosine + UMP + H(+). Uridylyltransferase (UTase) activity is inhibited by glutamine, while glutamine activates uridylyl-removing (UR) activity. Its function is as follows. Modifies, by uridylylation and deuridylylation, the PII regulatory proteins (GlnB and homologs), in response to the nitrogen status of the cell that GlnD senses through the glutamine level. Under low glutamine levels, catalyzes the conversion of the PII proteins and UTP to PII-UMP and PPi, while under higher glutamine levels, GlnD hydrolyzes PII-UMP to PII and UMP (deuridylylation). Thus, controls uridylylation state and activity of the PII proteins, and plays an important role in the regulation of nitrogen assimilation and metabolism. The polypeptide is Bifunctional uridylyltransferase/uridylyl-removing enzyme (glnD) (Corynebacterium glutamicum (strain ATCC 13032 / DSM 20300 / JCM 1318 / BCRC 11384 / CCUG 27702 / LMG 3730 / NBRC 12168 / NCIMB 10025 / NRRL B-2784 / 534)).